We begin with the raw amino-acid sequence, 207 residues long: dTTP/UTP pyrophosphatase (207 aa).

The active-site Proton acceptor is the D87.

This sequence belongs to the Maf family. YhdE subfamily. Requires a divalent metal cation as cofactor.

It is found in the cytoplasm. It carries out the reaction dTTP + H2O = dTMP + diphosphate + H(+). The catalysed reaction is UTP + H2O = UMP + diphosphate + H(+). Its function is as follows. Nucleoside triphosphate pyrophosphatase that hydrolyzes dTTP and UTP. May have a dual role in cell division arrest and in preventing the incorporation of modified nucleotides into cellular nucleic acids. The polypeptide is dTTP/UTP pyrophosphatase (Ralstonia nicotianae (strain ATCC BAA-1114 / GMI1000) (Ralstonia solanacearum)).